Reading from the N-terminus, the 262-residue chain is Adenosylcobinamide-GDP ribazoletransferase (262 aa).

6 helical membrane passes run 43–63, 66–86, 120–140, 146–166, 191–211, and 242–262; these read YFGLVGLLVGLLSAIVFWLTQ, LPAGVSVLLAMLVGVLLTGGF, GALALMLALLLKWQLLVELAL, AGSALIVAHTVSRVVSASIIF, LLILIASGVLVLLFLKGLAAL, and AAQQIAEIVCYFVLLVVGNIL.

It belongs to the CobS family. It depends on Mg(2+) as a cofactor.

It is found in the cell inner membrane. It catalyses the reaction alpha-ribazole + adenosylcob(III)inamide-GDP = adenosylcob(III)alamin + GMP + H(+). The catalysed reaction is alpha-ribazole 5'-phosphate + adenosylcob(III)inamide-GDP = adenosylcob(III)alamin 5'-phosphate + GMP + H(+). It participates in cofactor biosynthesis; adenosylcobalamin biosynthesis; adenosylcobalamin from cob(II)yrinate a,c-diamide: step 7/7. In terms of biological role, joins adenosylcobinamide-GDP and alpha-ribazole to generate adenosylcobalamin (Ado-cobalamin). Also synthesizes adenosylcobalamin 5'-phosphate from adenosylcobinamide-GDP and alpha-ribazole 5'-phosphate. This Shewanella baltica (strain OS195) protein is Adenosylcobinamide-GDP ribazoletransferase.